The sequence spans 568 residues: Matrix metalloproteinase-21 (568 aa).

The signal sequence occupies residues M1–P24. Positions E25–Q143 are excised as a propeptide. A Cysteine switch motif is present at residues P110–T117. Zn(2+) contacts are provided by C112 and H282. The active site involves E283. H286 and H292 together coordinate Zn(2+). C328 and C559 are disulfide-bonded. Hemopexin repeat units lie at residues K329–I388, T390–I446, P447–I495, and F502–V558. N-linked (GlcNAc...) asparagine glycosylation is present at N371.

The protein belongs to the peptidase M10A family. Zn(2+) serves as cofactor. Ca(2+) is required as a cofactor. The precursor is cleaved by a furin endopeptidase.

It is found in the secreted. Plays a specialized role in the generation of left-right asymmetry during embryogenesis. May act as a negative regulator of the NOTCH-signaling pathway. Cleaves alpha-1-antitrypsin. This is Matrix metalloproteinase-21 (Mmp21) from Mus musculus (Mouse).